We begin with the raw amino-acid sequence, 319 residues long: MAVYTEVTDDALAAFLEGYDIGRMVAFRGIAEGVENSNYSLRTTEGDFILTLYERRVDPADLPWFLGLMEHLAAKSLPCPLPVRARDGANLNPLAGRIAAITTFLPGVWPRRPTVAHCGPLGAAMARMHLAGEDYAPTRANALGPQGWPPLLARCGDSGDAVRPGLTGEVRTALDATLAAWPGALPRGHIHADLFPDNVFFLDHAISGLIDFYFAATDLYAYDIAVCLNAWCFEPDFSFNITKSRALLRGYQAVRPLSAAETEALPVLCRGAAIRFLLTRLYDWINTPDDALVTRKDPLDYYWRLRFHLQAGSAADYGV.

It belongs to the pseudomonas-type ThrB family.

The enzyme catalyses L-homoserine + ATP = O-phospho-L-homoserine + ADP + H(+). The protein operates within amino-acid biosynthesis; L-threonine biosynthesis; L-threonine from L-aspartate: step 4/5. The sequence is that of Homoserine kinase from Acidiphilium cryptum (strain JF-5).